A 311-amino-acid chain; its full sequence is Olfactory receptor 14I1 (311 aa).

Topologically, residues 1–26 (MDNLTKVTEFLLMEFSGIWELQVLHA) are extracellular. N-linked (GlcNAc...) asparagine glycosylation is present at Asn-3. A helical membrane pass occupies residues 27–47 (GLFLLIYLAVLVGNLLIIAVI). Over 48–55 (TLDQHLHT) the chain is Cytoplasmic. A helical membrane pass occupies residues 56–76 (PMYFFLKNLSVLDLCYISVTV). The Extracellular portion of the chain corresponds to 77–92 (PKSIRNSLTRRSSISY). The helical transmembrane segment at 93–113 (LGCVAQVYFFSAFASAELAFL) threads the bilayer. A disulfide bridge connects residues Cys-95 and Cys-188. The Cytoplasmic segment spans residues 114-141 (TVMSYDRYVAICHPLQYRAVMTSGGCYQ). Residues 142–162 (MAVTTWLSCFSYAAVHTGNMF) traverse the membrane as a helical segment. The Extracellular segment spans residues 163-189 (REHVCRSSVIHQFFRDIPHVLALVSCE). A helical transmembrane segment spans residues 190–210 (VFFVEFLTLALSSCLVLGCFI). Residues 211-241 (LMMISYFQIFSTVLRIPSGQSRAKAFSTCSP) are Cytoplasmic-facing. A helical membrane pass occupies residues 242-262 (QLIVIMLFLTTGLFAALGPIA). Topologically, residues 263–269 (KALSIQD) are extracellular. The chain crosses the membrane as a helical span at residues 270–290 (LVIALTYTVLPPFLNPIIYSL). Topologically, residues 291–311 (RNKEIKTAMWRLFVKIYFLQK) are cytoplasmic.

Belongs to the G-protein coupled receptor 1 family.

It localises to the cell membrane. Its function is as follows. Odorant receptor. In Homo sapiens (Human), this protein is Olfactory receptor 14I1 (OR14I1).